Consider the following 197-residue polypeptide: Ribosomal RNA large subunit methyltransferase E (197 aa).

S-adenosyl-L-methionine is bound by residues G50, W52, D70, D88, and D111. The Proton acceptor role is filled by K151.

Belongs to the class I-like SAM-binding methyltransferase superfamily. RNA methyltransferase RlmE family.

The protein localises to the cytoplasm. The enzyme catalyses uridine(2552) in 23S rRNA + S-adenosyl-L-methionine = 2'-O-methyluridine(2552) in 23S rRNA + S-adenosyl-L-homocysteine + H(+). Functionally, specifically methylates the uridine in position 2552 of 23S rRNA at the 2'-O position of the ribose in the fully assembled 50S ribosomal subunit. This Syntrophobacter fumaroxidans (strain DSM 10017 / MPOB) protein is Ribosomal RNA large subunit methyltransferase E.